Here is a 372-residue protein sequence, read N- to C-terminus: DNA replication and repair protein RecF (372 aa).

30 to 37 is a binding site for ATP; that stretch reads GENGQGKT.

Belongs to the RecF family.

The protein localises to the cytoplasm. Its function is as follows. The RecF protein is involved in DNA metabolism; it is required for DNA replication and normal SOS inducibility. RecF binds preferentially to single-stranded, linear DNA. It also seems to bind ATP. The chain is DNA replication and repair protein RecF from Anaeromyxobacter dehalogenans (strain 2CP-1 / ATCC BAA-258).